Reading from the N-terminus, the 240-residue chain is Serine protease SplB (240 aa).

The first 36 residues, 1-36 (MNKNVVIKSLAALTILTSVTGIGITLVEEVQQTAKA), serve as a signal peptide directing secretion. Residues H75, D113, and S193 each act as charge relay system in the active site.

Belongs to the peptidase S1B family.

It is found in the secreted. Its function is as follows. Serine protease that cleaves specifically after the sequence Trp-Glu-Leu-Gln. This is Serine protease SplB (splB) from Staphylococcus aureus (strain MW2).